The primary structure comprises 411 residues: LL-diaminopimelate aminotransferase (411 aa).

Substrate contacts are provided by Tyr15 and Gly42. Pyridoxal 5'-phosphate-binding positions include Tyr72, 108–109 (SK), Tyr132, Asn187, Tyr218, and 246–248 (SFS). Residues Lys109, Tyr132, and Asn187 each coordinate substrate. The residue at position 249 (Lys249) is an N6-(pyridoxal phosphate)lysine. Pyridoxal 5'-phosphate-binding residues include Arg257 and Asn292. Substrate is bound by residues Asn292 and Arg388.

Belongs to the class-I pyridoxal-phosphate-dependent aminotransferase family. LL-diaminopimelate aminotransferase subfamily. Homodimer. Pyridoxal 5'-phosphate is required as a cofactor.

The catalysed reaction is (2S,6S)-2,6-diaminopimelate + 2-oxoglutarate = (S)-2,3,4,5-tetrahydrodipicolinate + L-glutamate + H2O + H(+). The protein operates within amino-acid biosynthesis; L-lysine biosynthesis via DAP pathway; LL-2,6-diaminopimelate from (S)-tetrahydrodipicolinate (aminotransferase route): step 1/1. Involved in the synthesis of meso-diaminopimelate (m-DAP or DL-DAP), required for both lysine and peptidoglycan biosynthesis. Catalyzes the direct conversion of tetrahydrodipicolinate to LL-diaminopimelate. This is LL-diaminopimelate aminotransferase from Gloeothece citriformis (strain PCC 7424) (Cyanothece sp. (strain PCC 7424)).